We begin with the raw amino-acid sequence, 500 residues long: Glycerol kinase (500 aa).

ADP is bound at residue Thr-15. Thr-15, Thr-16, and Ser-17 together coordinate ATP. Thr-15 lines the sn-glycerol 3-phosphate pocket. Arg-19 contributes to the ADP binding site. Residues Arg-85, Glu-86, Tyr-137, and Asp-245 each coordinate sn-glycerol 3-phosphate. Residues Arg-85, Glu-86, Tyr-137, Asp-245, and Gln-246 each coordinate glycerol. 2 residues coordinate ADP: Thr-267 and Gly-310. ATP contacts are provided by Thr-267, Gly-310, Gln-314, and Gly-411. ADP is bound by residues Gly-411 and Asn-415.

The protein belongs to the FGGY kinase family.

It carries out the reaction glycerol + ATP = sn-glycerol 3-phosphate + ADP + H(+). The protein operates within polyol metabolism; glycerol degradation via glycerol kinase pathway; sn-glycerol 3-phosphate from glycerol: step 1/1. Its activity is regulated as follows. Inhibited by fructose 1,6-bisphosphate (FBP). Key enzyme in the regulation of glycerol uptake and metabolism. Catalyzes the phosphorylation of glycerol to yield sn-glycerol 3-phosphate. This Aeromonas hydrophila subsp. hydrophila (strain ATCC 7966 / DSM 30187 / BCRC 13018 / CCUG 14551 / JCM 1027 / KCTC 2358 / NCIMB 9240 / NCTC 8049) protein is Glycerol kinase.